Reading from the N-terminus, the 295-residue chain is Protein FAM110A (295 aa).

Disordered stretches follow at residues 117-148 (PVSP…PPSI) and 160-191 (PASP…KSDL). Composition is skewed to pro residues over residues 138–147 (LATPPRPPPS) and 160–171 (PASPIQPCPSPG).

This sequence belongs to the FAM110 family. In terms of assembly, may interact with CSPP1.

It localises to the cytoplasm. The protein localises to the cytoskeleton. The protein resides in the microtubule organizing center. It is found in the centrosome. Its subcellular location is the spindle pole. The chain is Protein FAM110A (FAM110A) from Bos taurus (Bovine).